The primary structure comprises 548 residues: Putative malate oxidoreductase [NAD] (548 aa).

Tyr-96 functions as the Proton donor in the catalytic mechanism. Lys-169 acts as the Proton acceptor in catalysis. A divalent metal cation is bound by residues Glu-240, Asp-241, and Asp-264. Residues 297–300 (AGTA), Asn-410, and Asn-455 contribute to the NAD(+) site.

This sequence belongs to the malic enzymes family. Requires Mg(2+) as cofactor. Mn(2+) is required as a cofactor.

The enzyme catalyses (S)-malate + NAD(+) = pyruvate + CO2 + NADH. It catalyses the reaction oxaloacetate + H(+) = pyruvate + CO2. This chain is Putative malate oxidoreductase [NAD] (mez), found in Mycobacterium tuberculosis (strain CDC 1551 / Oshkosh).